The chain runs to 95 residues: Small ribosomal subunit protein uS15 (95 aa).

The protein belongs to the universal ribosomal protein uS15 family. Part of the 30S ribosomal subunit. Forms a bridge to the 50S subunit in the 70S ribosome, contacting the 23S rRNA.

Functionally, one of the primary rRNA binding proteins, it binds directly to 16S rRNA where it helps nucleate assembly of the platform of the 30S subunit by binding and bridging several RNA helices of the 16S rRNA. Its function is as follows. Forms an intersubunit bridge (bridge B4) with the 23S rRNA of the 50S subunit in the ribosome. This is Small ribosomal subunit protein uS15 from Sulfurihydrogenibium sp. (strain YO3AOP1).